The following is a 294-amino-acid chain: Xyloglucan endotransglucosylase protein 34 (294 aa).

Positions 1–22 are cleaved as a signal peptide; that stretch reads MAAAYPWTLFLGMLVMVSGTMG. The region spanning 23 to 221 is the GH16 domain; the sequence is AALRKPVDVA…WSKAPFIASY (199 aa). The Nucleophile role is filled by Glu107. Glu111 functions as the Proton donor in the catalytic mechanism. Glu111 is a binding site for xyloglucan. Asn115 carries N-linked (GlcNAc...) asparagine glycosylation. Xyloglucan is bound by residues 124 to 126, 134 to 136, 200 to 201, and Gly205; these read QTN, DRE, and DW. Disulfide bonds link Cys229–Cys238 and Cys275–Cys288. Arg280 serves as a coordination point for xyloglucan.

Belongs to the glycosyl hydrolase 16 family. XTH group 1 subfamily. Contains at least one intrachain disulfide bond essential for its enzymatic activity. Post-translationally, N-glycosylated. Contains N-acetylglucosamine and mannose. Glycosylation is not essential for its catalytic activity. As to expression, expressed in mature gelatinous (G) cell wall layer of the tension wood fibers. Highly expressed in the outer zone of the G layer close to the secondary S2 layer. Not expressed in the mature walls of the ray cells or vessel elements (at protein level). Highest expression in both the phloem/cambium and differentiating xylem of the mature stem containing primarily secondary cell wall forming cells, in root tips and young roots. Expressed at low levels in apical bud.

Its subcellular location is the secreted. The protein localises to the cell wall. The protein resides in the extracellular space. It is found in the apoplast. It localises to the cytoplasm. The enzyme catalyses breaks a beta-(1-&gt;4) bond in the backbone of a xyloglucan and transfers the xyloglucanyl segment on to O-4 of the non-reducing terminal glucose residue of an acceptor, which can be a xyloglucan or an oligosaccharide of xyloglucan.. Functionally, catalyzes xyloglucan endotransglycosylation (XET). Cleaves and religates xyloglucan polymers. Does not catalyze xyloglucan endohydrolysis (XEH). Involved in early phases of secondary (S) cell wall formation in fibers of the xylem and phloem vascular tissues of wood stems. May play a role in restructuring primary cell walls, possibly creating and reinforcing the connections between the primary and S cell wall layers. Functions in the gelatinous (G) layers of the tension wood fibers that are involved in bending of the wood stems. May play a role in G fiber shrinking by repairing broken xyloglucan cross-links between G and S2 cell wall layers via its XET activity to maintain connections between the layers. The polypeptide is Xyloglucan endotransglucosylase protein 34 (Populus tremula x Populus tremuloides (Hybrid aspen)).